The following is a 226-amino-acid chain: UPF0758 protein Daci_1904 (226 aa).

The MPN domain occupies 104–226 (ALASPEAVAR…SLSMAGQGML (123 aa)). Zn(2+) contacts are provided by His-175, His-177, and Asp-188. Positions 175–188 (HNHPSGQVQASAAD) match the JAMM motif motif.

It belongs to the UPF0758 family.

In Delftia acidovorans (strain DSM 14801 / SPH-1), this protein is UPF0758 protein Daci_1904.